The chain runs to 293 residues: MSLFDWFADRRKGQYVANVKQEPDEGDGLWSKCPECGQVVYLKDLKLNASVCANCGHHHRIDSAERIALIADPDSFQVLNADLAPVDPLGFKDRRAYADRLRESQASTGLRDGVVTGLCRVEGIPMGLAAMDFRFMGGSMGSVVGEKITRLIEDSTARKLPLLIVCASGGARMQEGMLSLMQMAKISGALERHREAELLYMPLLTHPTTGGVTASFAMLGDLILAEPKALIGFAGRRVIEQTLREKLPDNFQTAEYLQEHGFVDTIVPRTQLRSTLANLLRLHGCKPMELTSA.

One can recognise a CoA carboxyltransferase N-terminal domain in the interval leucine 29–alanine 293. 4 residues coordinate Zn(2+): cysteine 33, cysteine 36, cysteine 52, and cysteine 55. A C4-type zinc finger spans residues cysteine 33–cysteine 55.

This sequence belongs to the AccD/PCCB family. As to quaternary structure, acetyl-CoA carboxylase is a heterohexamer composed of biotin carboxyl carrier protein (AccB), biotin carboxylase (AccC) and two subunits each of ACCase subunit alpha (AccA) and ACCase subunit beta (AccD). Requires Zn(2+) as cofactor.

Its subcellular location is the cytoplasm. It catalyses the reaction N(6)-carboxybiotinyl-L-lysyl-[protein] + acetyl-CoA = N(6)-biotinyl-L-lysyl-[protein] + malonyl-CoA. It participates in lipid metabolism; malonyl-CoA biosynthesis; malonyl-CoA from acetyl-CoA: step 1/1. Functionally, component of the acetyl coenzyme A carboxylase (ACC) complex. Biotin carboxylase (BC) catalyzes the carboxylation of biotin on its carrier protein (BCCP) and then the CO(2) group is transferred by the transcarboxylase to acetyl-CoA to form malonyl-CoA. This chain is Acetyl-coenzyme A carboxylase carboxyl transferase subunit beta, found in Synechococcus sp. (strain CC9605).